The sequence spans 137 residues: Structural protein A137R (137 aa).

The protein belongs to the asfivirus A137R family. In terms of assembly, interacts with host TBK1.

The protein resides in the virion. It is found in the host cytoplasm. Functionally, plays a role in the inhibition of the host innate immune response. Mechanistically, promotes the autophagy-mediated lysosomal degradation of host TBK1 and affects IRF3 nuclear translocation to block type I IFN production. This Ornithodoros (relapsing fever ticks) protein is Structural protein A137R.